We begin with the raw amino-acid sequence, 406 residues long: Putative cyclin-F3-2 (406 aa).

Residues methionine 1–leucine 107 form a disordered region. 2 stretches are compositionally biased toward low complexity: residues arginine 11 to alanine 21 and asparagine 29 to glutamate 57.

It belongs to the cyclin family. Cyclin F subfamily.

This Oryza sativa subsp. japonica (Rice) protein is Putative cyclin-F3-2 (CYCF3-2).